Consider the following 441-residue polypeptide: Arginine biosynthesis bifunctional protein ArgJ, mitochondrial (441 aa).

Residues Thr-177, Lys-204, Thr-215, Glu-301, Asn-436, and Ser-441 each coordinate substrate. The Nucleophile role is filled by Thr-215.

This sequence belongs to the ArgJ family. As to quaternary structure, heterodimer of an alpha and a beta chain. The alpha and beta chains are autoproteolytically processed from a single precursor protein within the mitochondrion.

The protein localises to the mitochondrion matrix. The catalysed reaction is N(2)-acetyl-L-ornithine + L-glutamate = N-acetyl-L-glutamate + L-ornithine. The enzyme catalyses L-glutamate + acetyl-CoA = N-acetyl-L-glutamate + CoA + H(+). The protein operates within amino-acid biosynthesis; L-arginine biosynthesis; L-ornithine and N-acetyl-L-glutamate from L-glutamate and N(2)-acetyl-L-ornithine (cyclic): step 1/1. Its pathway is amino-acid biosynthesis; L-arginine biosynthesis; N(2)-acetyl-L-ornithine from L-glutamate: step 1/4. Functionally, catalyzes two activities which are involved in the cyclic version of arginine biosynthesis: the synthesis of acetylglutamate from glutamate and acetyl-CoA, and of ornithine by transacetylation between acetylornithine and glutamate. This is Arginine biosynthesis bifunctional protein ArgJ, mitochondrial from Lachancea thermotolerans (strain ATCC 56472 / CBS 6340 / NRRL Y-8284) (Yeast).